The sequence spans 123 residues: Fluoride-specific ion channel FluC 2 (123 aa).

Helical transmembrane passes span 30–50 (FPLP…FVAG), 68–88 (VGFI…VLLL), and 93–113 (WPLA…AVWV). Residues Gly-72 and Thr-75 each coordinate Na(+).

This sequence belongs to the fluoride channel Fluc/FEX (TC 1.A.43) family.

It localises to the cell membrane. It catalyses the reaction fluoride(in) = fluoride(out). Its activity is regulated as follows. Na(+) is not transported, but it plays an essential structural role and its presence is essential for fluoride channel function. Fluoride-specific ion channel. Important for reducing fluoride concentration in the cell, thus reducing its toxicity. In Symbiobacterium thermophilum (strain DSM 24528 / JCM 14929 / IAM 14863 / T), this protein is Fluoride-specific ion channel FluC 2.